A 157-amino-acid polypeptide reads, in one-letter code: Transcriptional repressor NrdR (157 aa).

A zinc finger lies at 3-34 (CPFCRHPDSRVVDSRTSDDGLSIRRRRQCPEC). The region spanning 46–136 (LSVIKRNGVV…VYQGFDSLDD (91 aa)) is the ATP-cone domain.

This sequence belongs to the NrdR family. Zn(2+) serves as cofactor.

In terms of biological role, negatively regulates transcription of bacterial ribonucleotide reductase nrd genes and operons by binding to NrdR-boxes. The sequence is that of Transcriptional repressor NrdR from Clavibacter sepedonicus (Clavibacter michiganensis subsp. sepedonicus).